The primary structure comprises 361 residues: Probable U3 small nucleolar RNA-associated protein 11 (361 aa).

4 disordered regions span residues 1–52, 200–235, 262–295, and 311–361; these read MTKG…KKRK, LMSG…TPET, KRES…TRLL, and RHVR…RRAR. Residues 17–33 show a composition bias toward basic residues; the sequence is HLKRKTHLERSQPKSRQ. Basic and acidic residues-rich tracts occupy residues 37-46 and 217-228; these read QLEKHKDHVL and RREVQEKMRRSG. Over residues 278–287 the composition is skewed to acidic residues; it reads DDGEQEEAAA. The span at 342–352 shows a compositional bias: basic and acidic residues; it reads RQMEQRRESRF.

The protein belongs to the UTP11 family. In terms of assembly, component of the ribosomal small subunit (SSU) processome.

It is found in the nucleus. The protein resides in the nucleolus. Involved in nucleolar processing of pre-18S ribosomal RNA. The sequence is that of Probable U3 small nucleolar RNA-associated protein 11 from Leishmania major.